A 144-amino-acid chain; its full sequence is Large ribosomal subunit protein uL15 (144 aa).

Residues 1–45 (MNLNTLSPDPGSRPSRRRVGRGIGSGLGKTCGKGHKGQKSRAGGY) are disordered. Over residues 21–31 (RGIGSGLGKTC) the composition is skewed to gly residues.

It belongs to the universal ribosomal protein uL15 family. As to quaternary structure, part of the 50S ribosomal subunit.

In terms of biological role, binds to the 23S rRNA. This Legionella pneumophila (strain Paris) protein is Large ribosomal subunit protein uL15.